The chain runs to 111 residues: uncharacterized protein (111 aa).

To B.subtilis XkdW.

This is an uncharacterized protein from Bacillus subtilis (strain 168).